Consider the following 147-residue polypeptide: Hemoglobin subunit gamma (147 aa).

In terms of domain architecture, Globin spans 3–147 (YFTAEEKAAI…VASALARKYH (145 aa)). Residues His64 and His93 each coordinate heme b.

It belongs to the globin family. Heterotetramer of two alpha chains and two gamma chains in fetal hemoglobin (Hb F). As to expression, red blood cells.

Its function is as follows. Gamma chains make up the fetal hemoglobin F, in combination with alpha chains. This Dugong dugon (Dugong) protein is Hemoglobin subunit gamma (HBG).